The primary structure comprises 1104 residues: Receptor-type guanylate cyclase gcy-15 (1104 aa).

The Extracellular portion of the chain corresponds to 1 to 431 (MEIAINRLNA…ENCGPPANNT (431 aa)). Residues Asn43, Asn237, Asn263, Asn287, Asn407, and Asn429 are each glycosylated (N-linked (GlcNAc...) asparagine). Residues 432 to 452 (FIIVISVGVAVLIGLAIAAAF) form a helical membrane-spanning segment. Over 453-1104 (LYKRYRYERR…QIQEKTYEFS (652 aa)) the chain is Cytoplasmic. Residues 528-823 (FNTGSTARAG…QIKRKLKPLT (296 aa)) form the Protein kinase domain. Residues 534–542 (ARAGPFGPI) and Lys576 contribute to the ATP site. A coiled-coil region spans residues 838-871 (IEKYTDKLEKDIAERNEELEAEKAKSEALLKMML). The Guanylate cyclase domain occupies 894-1024 (TVFFSDCPGF…DTVNTASRME (131 aa)).

Belongs to the adenylyl cyclase class-4/guanylyl cyclase family. Expressed bilaterally in ASG sensory neurons.

Its subcellular location is the cell membrane. The enzyme catalyses GTP = 3',5'-cyclic GMP + diphosphate. Functionally, guanylate cyclase involved in the production of the second messenger cGMP. The polypeptide is Receptor-type guanylate cyclase gcy-15 (Caenorhabditis elegans).